The following is a 169-amino-acid chain: Crossover junction endodeoxyribonuclease RuvC (169 aa).

Active-site residues include D11, E71, and D143. 3 residues coordinate Mg(2+): D11, E71, and D143.

This sequence belongs to the RuvC family. Homodimer which binds Holliday junction (HJ) DNA. The HJ becomes 2-fold symmetrical on binding to RuvC with unstacked arms; it has a different conformation from HJ DNA in complex with RuvA. In the full resolvosome a probable DNA-RuvA(4)-RuvB(12)-RuvC(2) complex forms which resolves the HJ. Mg(2+) serves as cofactor.

The protein resides in the cytoplasm. It catalyses the reaction Endonucleolytic cleavage at a junction such as a reciprocal single-stranded crossover between two homologous DNA duplexes (Holliday junction).. The RuvA-RuvB-RuvC complex processes Holliday junction (HJ) DNA during genetic recombination and DNA repair. Endonuclease that resolves HJ intermediates. Cleaves cruciform DNA by making single-stranded nicks across the HJ at symmetrical positions within the homologous arms, yielding a 5'-phosphate and a 3'-hydroxyl group; requires a central core of homology in the junction. The consensus cleavage sequence is 5'-(A/T)TT(C/G)-3'. Cleavage occurs on the 3'-side of the TT dinucleotide at the point of strand exchange. HJ branch migration catalyzed by RuvA-RuvB allows RuvC to scan DNA until it finds its consensus sequence, where it cleaves and resolves the cruciform DNA. This Bartonella henselae (strain ATCC 49882 / DSM 28221 / CCUG 30454 / Houston 1) (Rochalimaea henselae) protein is Crossover junction endodeoxyribonuclease RuvC.